A 914-amino-acid polypeptide reads, in one-letter code: High affinity cAMP-specific and IBMX-insensitive 3',5'-cyclic phosphodiesterase 8 (914 aa).

Disordered stretches follow at residues 1-27 (MGCS…PLDA) and 113-138 (RRAT…HRKS). Residues 116–129 (TGSTGTSGTSSSGG) are compositionally biased toward low complexity. One can recognise a PAS domain in the interval 312 to 359 (TQQALYTALHRLKEVVLITDDLLRIQYANRATERLLNMRLDEIISKQL). A PDEase domain is found at 558–893 (TAAIVPAKMK…SQWKKYDEQG (336 aa)). The active-site Proton donor is the His640. Residues His644, His682, Asp683, and Asp799 each coordinate a divalent metal cation.

It belongs to the cyclic nucleotide phosphodiesterase family. PDE8 subfamily. A divalent metal cation is required as a cofactor. Expressed in Malpighian tubules and head.

It catalyses the reaction 3',5'-cyclic AMP + H2O = AMP + H(+). It functions in the pathway purine metabolism; 3',5'-cyclic AMP degradation; AMP from 3',5'-cyclic AMP: step 1/1. Hydrolyzes the second messenger cAMP, which is a key regulator of many important physiological processes. Involved in the positive regulation of MAP kinase signaling and in inhibiting oxidative stress-induced cell death. This chain is High affinity cAMP-specific and IBMX-insensitive 3',5'-cyclic phosphodiesterase 8, found in Drosophila melanogaster (Fruit fly).